Consider the following 1258-residue polypeptide: Phospholipid-transporting ATPase C887.12 (1258 aa).

Disordered stretches follow at residues methionine 1–aspartate 41 and tyrosine 53–asparagine 83. Over methionine 1–lysine 183 the chain is Cytoplasmic. Positions tyrosine 53–proline 64 are enriched in polar residues. A helical membrane pass occupies residues tyrosine 184–valine 204. Residues asparagine 205 to threonine 208 are Lumenal-facing. A helical membrane pass occupies residues threonine 209 to isoleucine 229. At lysine 230–glutamine 406 the chain is on the cytoplasmic side. A helical membrane pass occupies residues isoleucine 407–isoleucine 427. At histidine 428–lysine 451 the chain is on the lumenal side. Residues glycine 452 to phenylalanine 472 traverse the membrane as a helical segment. Residues glutamate 473 to asparagine 974 are Cytoplasmic-facing. Catalysis depends on aspartate 518, which acts as the 4-aspartylphosphate intermediate. ATP contacts are provided by aspartate 518, lysine 519, threonine 520, glutamate 613, phenylalanine 654, serine 656, lysine 659, lysine 677, arginine 710, threonine 711, threonine 790, glycine 791, aspartate 792, arginine 883, and lysine 889. A Mg(2+)-binding site is contributed by aspartate 518. Threonine 520 is a binding site for Mg(2+). Aspartate 909 lines the Mg(2+) pocket. ATP is bound by residues asparagine 912 and aspartate 913. Residue aspartate 913 coordinates Mg(2+). Residues isoleucine 975 to isoleucine 995 traverse the membrane as a helical segment. Over phenylalanine 996 to serine 998 the chain is Lumenal. Residues tryptophan 999 to phenylalanine 1019 traverse the membrane as a helical segment. Residues aspartate 1020–serine 1051 are Cytoplasmic-facing. A helical membrane pass occupies residues tryptophan 1052 to tyrosine 1072. The Lumenal portion of the chain corresponds to tyrosine 1073–tryptophan 1086. A helical transmembrane segment spans residues valine 1087 to isoleucine 1107. Lysine 1103 contributes to the a 1,2-diacyl-sn-glycero-3-phospho-(1D-myo-inositol 4-phosphate) binding site. Residues serine 1108 to threonine 1115 lie on the Cytoplasmic side of the membrane. A helical transmembrane segment spans residues valine 1116–alanine 1136. Residues alanine 1137–glycine 1148 lie on the Lumenal side of the membrane. The chain crosses the membrane as a helical span at residues isoleucine 1149–isoleucine 1169. The Cytoplasmic segment spans residues alanine 1170 to arginine 1258. The a 1,2-diacyl-sn-glycero-3-phospho-(1D-myo-inositol 4-phosphate) site is built by arginine 1173, tryptophan 1177, lysine 1178, tyrosine 1189, and histidine 1190.

It belongs to the cation transport ATPase (P-type) (TC 3.A.3) family. Type IV subfamily. Mg(2+) serves as cofactor.

The protein resides in the endoplasmic reticulum membrane. Its subcellular location is the golgi apparatus. It is found in the trans-Golgi network membrane. The catalysed reaction is ATP + H2O + phospholipidSide 1 = ADP + phosphate + phospholipidSide 2.. It carries out the reaction a 1,2-diacyl-sn-glycero-3-phospho-L-serine(out) + ATP + H2O = a 1,2-diacyl-sn-glycero-3-phospho-L-serine(in) + ADP + phosphate + H(+). It catalyses the reaction a 1,2-diacyl-sn-glycero-3-phosphoethanolamine(out) + ATP + H2O = a 1,2-diacyl-sn-glycero-3-phosphoethanolamine(in) + ADP + phosphate + H(+). In terms of biological role, catalytic component of a P4-ATPase flippase complex which catalyzes the hydrolysis of ATP coupled to the transport of phosphatidylserine and small amounts of ethanolamine from the lumen to the cytosolic leaflet of the trans-Golgi network and ensures the maintenance of asymmetric distribution of phospholipids. In Schizosaccharomyces pombe (strain 972 / ATCC 24843) (Fission yeast), this protein is Phospholipid-transporting ATPase C887.12.